Here is a 190-residue protein sequence, read N- to C-terminus: Protein GrpE (190 aa).

The protein belongs to the GrpE family. In terms of assembly, homodimer.

It localises to the cytoplasm. In terms of biological role, participates actively in the response to hyperosmotic and heat shock by preventing the aggregation of stress-denatured proteins, in association with DnaK and GrpE. It is the nucleotide exchange factor for DnaK and may function as a thermosensor. Unfolded proteins bind initially to DnaJ; upon interaction with the DnaJ-bound protein, DnaK hydrolyzes its bound ATP, resulting in the formation of a stable complex. GrpE releases ADP from DnaK; ATP binding to DnaK triggers the release of the substrate protein, thus completing the reaction cycle. Several rounds of ATP-dependent interactions between DnaJ, DnaK and GrpE are required for fully efficient folding. The chain is Protein GrpE from Streptococcus agalactiae serotype III (strain NEM316).